A 247-amino-acid polypeptide reads, in one-letter code: Probable transcriptional regulatory protein Dvul_0986 (247 aa).

Positions 1-22 (MAGHSKWANIQHRKGRQDAKRG) are disordered.

It belongs to the TACO1 family.

It localises to the cytoplasm. The chain is Probable transcriptional regulatory protein Dvul_0986 from Nitratidesulfovibrio vulgaris (strain DP4) (Desulfovibrio vulgaris).